Consider the following 103-residue polypeptide: Co-chaperonin GroES (103 aa).

This sequence belongs to the GroES chaperonin family. In terms of assembly, heptamer of 7 subunits arranged in a ring. Interacts with the chaperonin GroEL.

It is found in the cytoplasm. Together with the chaperonin GroEL, plays an essential role in assisting protein folding. The GroEL-GroES system forms a nano-cage that allows encapsulation of the non-native substrate proteins and provides a physical environment optimized to promote and accelerate protein folding. GroES binds to the apical surface of the GroEL ring, thereby capping the opening of the GroEL channel. The chain is Co-chaperonin GroES from Prochlorococcus marinus (strain SARG / CCMP1375 / SS120).